The primary structure comprises 701 residues: Elongation factor G 1 (701 aa).

The 283-residue stretch at 8 to 290 folds into the tr-type G domain; sequence ERYRNIGISA…AVIDYLPSPL (283 aa). GTP is bound by residues 17-24, 88-92, and 142-145; these read AHIDAGKT, DTPGH, and NKMD.

It belongs to the TRAFAC class translation factor GTPase superfamily. Classic translation factor GTPase family. EF-G/EF-2 subfamily.

The protein resides in the cytoplasm. In terms of biological role, catalyzes the GTP-dependent ribosomal translocation step during translation elongation. During this step, the ribosome changes from the pre-translocational (PRE) to the post-translocational (POST) state as the newly formed A-site-bound peptidyl-tRNA and P-site-bound deacylated tRNA move to the P and E sites, respectively. Catalyzes the coordinated movement of the two tRNA molecules, the mRNA and conformational changes in the ribosome. The polypeptide is Elongation factor G 1 (Paraburkholderia xenovorans (strain LB400)).